The sequence spans 486 residues: Cardiolipin synthase A (486 aa).

2 helical membrane-spanning segments follow: residues 3–23 (TFYT…IAGV) and 38–58 (MAWL…YLSV). PLD phosphodiesterase domains lie at 219–246 (MDLR…VDPR) and 399–426 (EGGL…DMRS). Active-site residues include H224, K226, D231, H404, K406, and D411.

It belongs to the phospholipase D family. Cardiolipin synthase subfamily. ClsA sub-subfamily.

The protein localises to the cell inner membrane. It carries out the reaction 2 a 1,2-diacyl-sn-glycero-3-phospho-(1'-sn-glycerol) = a cardiolipin + glycerol. In terms of biological role, catalyzes the reversible phosphatidyl group transfer from one phosphatidylglycerol molecule to another to form cardiolipin (CL) (diphosphatidylglycerol) and glycerol. In Salmonella gallinarum (strain 287/91 / NCTC 13346), this protein is Cardiolipin synthase A.